A 482-amino-acid chain; its full sequence is Butyrophilin-like protein 2 (482 aa).

Residues 1–6 (MVDFPG) lie on the Cytoplasmic side of the membrane. A helical; Signal-anchor for type II membrane protein membrane pass occupies residues 7 to 23 (YNLSGAVASFLFILLTM). The Extracellular segment spans residues 24 to 482 (KQSEDFRVIG…VAVGLPRKRS (459 aa)). 3 consecutive Ig-like V-type domains span residues 29 to 140 (FRVI…LLLK), 142 to 234 (AGLG…SVIS), and 236 to 355 (PEKL…ASLD). 3 disulfide bridges follow: cysteine 50–cysteine 124, cysteine 164–cysteine 218, and cysteine 267–cysteine 341. An N-linked (GlcNAc...) asparagine glycan is attached at asparagine 210. Residue asparagine 427 is glycosylated (N-linked (GlcNAc...) asparagine).

This sequence belongs to the immunoglobulin superfamily. BTN/MOG family. Expressed in brain, heart, kidney, liver, pancreas, ovary, leukocyte, small intestine, testis and thymus.

The protein resides in the membrane. In terms of biological role, negative regulator of T-cell proliferation. The sequence is that of Butyrophilin-like protein 2 from Homo sapiens (Human).